The following is a 288-amino-acid chain: Polyamine aminopropyltransferase (288 aa).

In terms of domain architecture, PABS spans 9 to 242 (SGWLDEYHQG…GLWSWAFASM (234 aa)). Residue Gln36 participates in S-methyl-5'-thioadenosine binding. Residues His67 and Asp91 each coordinate spermidine. S-methyl-5'-thioadenosine is bound by residues Glu111 and 143 to 144 (NG). Asp162 acts as the Proton acceptor in catalysis. Position 169 (Pro169) interacts with S-methyl-5'-thioadenosine.

This sequence belongs to the spermidine/spermine synthase family. In terms of assembly, homodimer or homotetramer.

It localises to the cytoplasm. It catalyses the reaction S-adenosyl 3-(methylsulfanyl)propylamine + putrescine = S-methyl-5'-thioadenosine + spermidine + H(+). Its pathway is amine and polyamine biosynthesis; spermidine biosynthesis; spermidine from putrescine: step 1/1. In terms of biological role, catalyzes the irreversible transfer of a propylamine group from the amino donor S-adenosylmethioninamine (decarboxy-AdoMet) to putrescine (1,4-diaminobutane) to yield spermidine. The sequence is that of Polyamine aminopropyltransferase from Prochlorococcus marinus (strain NATL1A).